Reading from the N-terminus, the 305-residue chain is Porphobilinogen deaminase (305 aa).

Cysteine 238 carries the S-(dipyrrolylmethanemethyl)cysteine modification.

It belongs to the HMBS family. As to quaternary structure, monomer. Requires dipyrromethane as cofactor.

The enzyme catalyses 4 porphobilinogen + H2O = hydroxymethylbilane + 4 NH4(+). The protein operates within porphyrin-containing compound metabolism; protoporphyrin-IX biosynthesis; coproporphyrinogen-III from 5-aminolevulinate: step 2/4. Functionally, tetrapolymerization of the monopyrrole PBG into the hydroxymethylbilane pre-uroporphyrinogen in several discrete steps. The protein is Porphobilinogen deaminase of Rubrobacter xylanophilus (strain DSM 9941 / JCM 11954 / NBRC 16129 / PRD-1).